The sequence spans 74 residues: uncharacterized protein (74 aa).

This is an uncharacterized protein from Bacillus subtilis (strain 168).